Reading from the N-terminus, the 144-residue chain is Large ribosomal subunit protein uL15 (144 aa).

The tract at residues 1-57 is disordered; the sequence is MFLNTLRPGEGSKHAPKRVGRGIGSGLGKTGGRGHKGLKSRSGGSVKPGFEGGQMPL. The span at 21 to 31 shows a compositional bias: gly residues; it reads RGIGSGLGKTG.

Belongs to the universal ribosomal protein uL15 family. Part of the 50S ribosomal subunit.

Binds to the 23S rRNA. This Marinomonas sp. (strain MWYL1) protein is Large ribosomal subunit protein uL15.